The following is a 665-amino-acid chain: Long chain acyl-CoA synthetase 3 (665 aa).

228–239 (IMYTSGTTGDPK) contacts ATP. The fatty acid-binding stretch occupies residues 495 to 519 (DGWLHTGDVGEWQPDGAMKIIDRKK).

This sequence belongs to the ATP-dependent AMP-binding enzyme family. The cofactor is Mg(2+).

The catalysed reaction is a long-chain fatty acid + ATP + CoA = a long-chain fatty acyl-CoA + AMP + diphosphate. It participates in lipid metabolism; fatty acid metabolism. Functionally, activation of long-chain fatty acids for both synthesis of cellular lipids, and degradation via beta-oxidation. Preferentially uses palmitate, palmitoleate, oleate and linoleate. The sequence is that of Long chain acyl-CoA synthetase 3 (LACS3) from Arabidopsis thaliana (Mouse-ear cress).